The following is a 129-amino-acid chain: N16.2 matrix protein (129 aa).

The first 23 residues, 1 to 23 (MKCTLRWTITALVLLGICHLARP), serve as a signal peptide directing secretion. 5 consecutive repeat copies span residues 91-92 (NG), 93-94 (NG), 95-96 (DG), 97-98 (NG), and 99-100 (NG). Residues 91–100 (NGNGDGNGNG) are 5 X 2 AA tandem repeats of N-G.

It belongs to the N16 matrix protein family. In terms of assembly, heterooligomer; disulfide-linked. Pif97, Pif80, N16 and other proteins form a complex. Component of conchiolin, the organic matrix of nacre. Expressed at extremely high levels in the dorsal region of the mantle, which region may be responsible for the nacreous layer formation, but only in trace amounts at the mantle edge, which region may be responsible for the prismatic layer formation.

It is found in the secreted. The protein localises to the extracellular space. It localises to the extracellular matrix. Functionally, may be specifically involved in the formation of the nacreous layer. The polypeptide is N16.2 matrix protein (Pinctada fucata (Akoya pearl oyster)).